Here is a 294-residue protein sequence, read N- to C-terminus: MSEAYRQPVLGVIGGSGVYDIDGLEGARWQTVESPFGDVSDQILRGTLDGLEMAFLPRHGRGHVLAPSDVNYRANIDALKRAGVTEILSVSAVGSLAEDLPPGTFVIADQFIDRTFAREKSFFGKGLVAHVSMAHPVSAWLGDRVEEVLADLAIPHRRGGTYLCMEGPQFSTLAESNLYRQWGCHVIGMTNMPEAKLAREAEIAYCTVAMVTDFDCWHPDHDHVSVEAVVRVLLQNADKARSLVKAMPAKLKDRPYPLPDGSHRSLDNAIITHPDRRNPGMARKLSAVAGRVLG.

Phosphate-binding positions include serine 16, 58-59, and 91-92; these read RH and SA. Methionine 189 provides a ligand contact to substrate. Threonine 190 provides a ligand contact to phosphate. Position 213 to 215 (213 to 215) interacts with substrate; the sequence is DFD.

The protein belongs to the PNP/MTAP phosphorylase family. MTAP subfamily. In terms of assembly, homohexamer. Dimer of a homotrimer.

The enzyme catalyses S-methyl-5'-thioadenosine + phosphate = 5-(methylsulfanyl)-alpha-D-ribose 1-phosphate + adenine. The catalysed reaction is 5'-deoxyadenosine + phosphate = 5-deoxy-alpha-D-ribose 1-phosphate + adenine. It participates in amino-acid biosynthesis; L-methionine biosynthesis via salvage pathway; S-methyl-5-thio-alpha-D-ribose 1-phosphate from S-methyl-5'-thioadenosine (phosphorylase route): step 1/1. Its function is as follows. Catalyzes the reversible phosphorylation of S-methyl-5'-thioadenosine (MTA) to adenine and 5-methylthioribose-1-phosphate. Involved in the breakdown of MTA, a major by-product of polyamine biosynthesis. Responsible for the first step in the methionine salvage pathway after MTA has been generated from S-adenosylmethionine. Has broad substrate specificity with 6-aminopurine nucleosides as preferred substrates. Also catalyzes the phosphorylation of 5'-deoxyadenosine (5'dAdo) to 5-deoxyribose 1-phosphate. Part of a bifunctional DHAP-shunt salvage pathway for SAM by-products. In Rhodospirillum rubrum (strain ATCC 11170 / ATH 1.1.1 / DSM 467 / LMG 4362 / NCIMB 8255 / S1), this protein is S-methyl-5'-thioadenosine phosphorylase.